The chain runs to 300 residues: Iodotyrosine deiodinase (300 aa).

Residues 15–31 form a helical membrane-spanning segment; sequence VGLISVSIAAGVALGQL. Residues 110 to 114, S138, and 138 to 139 each bind FMN; these read RRSVR and SG. 4 residues coordinate 3,5-diiodo-L-tyrosine: A140, E167, Y171, and K192. 3-iodo-L-tyrosine-binding residues include A140, E167, Y171, and K192. Residues 247–249 and R289 each bind FMN; that span reads TTT.

It belongs to the nitroreductase family. It depends on FMN as a cofactor. Post-translationally, may be cleaved at Gln-55. The cleaved form retains catalytic activity.

It is found in the membrane. The catalysed reaction is 2 iodide + L-tyrosine + 2 NADP(+) = 3,5-diiodo-L-tyrosine + 2 NADPH + H(+). It catalyses the reaction iodide + L-tyrosine + NADP(+) = 3-iodo-L-tyrosine + NADPH. It carries out the reaction 3-iodo-L-tyrosine + iodide + NADP(+) = 3,5-diiodo-L-tyrosine + NADPH + H(+). The enzyme catalyses L-tyrosine + chloride + NADP(+) = 3-chloro-L-tyrosine + NADPH. The catalysed reaction is bromide + L-tyrosine + NADP(+) = 3-bromo-L-tyrosine + NADPH. In terms of biological role, catalyzes the dehalogenation of halotyrosines such as 3,5-diiodo-L-tyrosine. Likely to also catalyze the dehalogenation of other halotyrosines such as 3-bromo-L-tyrosine, 3-chloro-L-tyrosine and 3-iodo-L-tyrosine. The chain is Iodotyrosine deiodinase from Daphnia pulex (Water flea).